Consider the following 354-residue polypeptide: Uroporphyrinogen decarboxylase (354 aa).

Substrate contacts are provided by residues 27 to 31 (RQAGR), Asp77, Tyr154, Ser209, and His327.

This sequence belongs to the uroporphyrinogen decarboxylase family. As to quaternary structure, homodimer.

It localises to the cytoplasm. The catalysed reaction is uroporphyrinogen III + 4 H(+) = coproporphyrinogen III + 4 CO2. It participates in porphyrin-containing compound metabolism; protoporphyrin-IX biosynthesis; coproporphyrinogen-III from 5-aminolevulinate: step 4/4. Catalyzes the decarboxylation of four acetate groups of uroporphyrinogen-III to yield coproporphyrinogen-III. This Shewanella baltica (strain OS185) protein is Uroporphyrinogen decarboxylase.